The chain runs to 114 residues: Flagellar hook-basal body complex protein FliE (114 aa).

Belongs to the FliE family.

It is found in the bacterial flagellum basal body. This Burkholderia cenocepacia (strain ATCC BAA-245 / DSM 16553 / LMG 16656 / NCTC 13227 / J2315 / CF5610) (Burkholderia cepacia (strain J2315)) protein is Flagellar hook-basal body complex protein FliE.